The following is a 102-amino-acid chain: Monothiol glutaredoxin-S9 (102 aa).

The 101-residue stretch at methionine 1 to leucine 101 folds into the Glutaredoxin domain. Residue cysteine 21 coordinates [2Fe-2S] cluster.

The protein belongs to the glutaredoxin family. CC-type subfamily.

The protein localises to the cytoplasm. Its function is as follows. May only reduce GSH-thiol disulfides, but not protein disulfides. The chain is Monothiol glutaredoxin-S9 (GRXS9) from Arabidopsis thaliana (Mouse-ear cress).